Consider the following 425-residue polypeptide: UPF0597 protein Swoo_4889 (425 aa).

The protein belongs to the UPF0597 family.

This chain is UPF0597 protein Swoo_4889, found in Shewanella woodyi (strain ATCC 51908 / MS32).